The following is a 247-amino-acid chain: Ribosomal RNA processing protein 36 homolog (247 aa).

4 disordered regions span residues 1–29, 62–89, 136–188, and 218–247; these read MDNQLSDSSDDESPTDDCSDEGEVEHLKD, RTQGIPDLETKKKKNKGPQELSSKQRVP, SVEK…RELV, and GKLQKYLTKRRKKTASKDRRHVPERRQVDQ. The segment covering 8–23 has biased composition (acidic residues); it reads SSDDESPTDDCSDEGE. Basic and acidic residues-rich tracts occupy residues 136–153 and 164–174; these read SVEKELKKTKNAEKRKNL and ERSRKSAEAKR. The span at 218–240 shows a compositional bias: basic residues; the sequence is GKLQKYLTKRRKKTASKDRRHVP.

It belongs to the RRP36 family.

Its subcellular location is the nucleus. The protein localises to the nucleolus. Its function is as follows. Involved in the early processing steps of the pre-rRNA in the maturation pathway leading to the 18S rRNA. This Nematostella vectensis (Starlet sea anemone) protein is Ribosomal RNA processing protein 36 homolog.